The primary structure comprises 375 residues: Platelet-derived growth factor receptor-like protein (375 aa).

An N-terminal signal peptide occupies residues 1 to 21 (MKVWLLLGLLLVHEALEDVTG). Positions 22-64 (QHLPKNKRPKEPGENRIKPTNKKVKPKIPKMKDRDSANSAPKT) are disordered. Basic residues predominate over residues 40 to 50 (PTNKKVKPKIP). Residues 62 to 159 (PKTQSIMMQV…GYICRKDEAK (98 aa)) form the Ig-like C2-type 1 domain. C96 and C143 are disulfide-bonded. N-linked (GlcNAc...) asparagine glycosylation is found at N132 and N219. In terms of domain architecture, Ig-like C2-type 2 spans 272–375 (PSTTILASSN…TTVATTVEFS (104 aa)). A disulfide bridge links C293 with C357.

In terms of assembly, forms a complex composed of PDGFRL, TNK2 and GRB2. As to expression, expressed in colon, lung and liver.

Its subcellular location is the secreted. The sequence is that of Platelet-derived growth factor receptor-like protein (PDGFRL) from Homo sapiens (Human).